The following is a 386-amino-acid chain: MLIIFLFFYFCYGFNEPLNVVSHLNHDWFLFGDSRSDCNHINNLKIKNFDYLDIHPSLCNNGKISSSAGDSIFKSFHFTRFYNYTGEGDQIIFYEGVNFNPYHRFKCFPNGSNDVWLLNKVRFYRALYSNMAFFRYLTFVDIPYNVSLSKFNSCKSDILSLNNPIFINYSKEVYFTLLGCSLYLVPLCLFKSNFSQYYYNIDTGSVYGFSNVVYPDLDCIYISLKPGSYKVSTTAPFLSLPTKALCFDKSKQFVPVQVVDSRWNNERASDISLSVACQLPYCYFRNSSANYVGKYDINHGDSGFISILSGLLYNVSCISYYGVFLYDNFTSIWPYYSFGRCPTSSIIKHPICVYDFLPIILQGILLCLALLFVVFLLFLLYNDKSH.

Residues 1–11 (MLIIFLFFYFC) form the signal peptide. Residues 1-121 (MLIIFLFFYF…SNDVWLLNKV (121 aa)) are esterase domain 1. Residues 12-359 (YGFNEPLNVV…PICVYDFLPI (348 aa)) lie on the Virion surface side of the membrane. S34 serves as the catalytic Nucleophile. An intrachain disulfide couples C38 to C59. N-linked (GlcNAc...) asparagine; by host glycosylation is found at N83, N110, N145, and N168. C107 and C154 are oxidised to a cystine. The tract at residues 122–236 (RFYRALYSNM…GSYKVSTTAP (115 aa)) is receptor binding. Cystine bridges form between C180/C246, C188/C219, and C277/C282. Residues 237-349 (FLSLPTKALC…RCPTSSIIKH (113 aa)) are esterase domain 2. A glycan (N-linked (GlcNAc...) asparagine; by host) is linked at N286. Active-site charge relay system residues include D296 and H299. A disulfide bond links C317 and C341. N328 is a glycosylation site (N-linked (GlcNAc...) asparagine; by host). Residues 360-380 (ILQGILLCLALLFVVFLLFLL) traverse the membrane as a helical segment. The Intravirion portion of the chain corresponds to 381-386 (YNDKSH).

Belongs to the influenza type C/coronaviruses hemagglutinin-esterase family. As to quaternary structure, homodimer; disulfide-linked. Forms a complex with the M protein in the pre-Golgi. Associates then with S-M complex to form a ternary complex S-M-HE. In terms of processing, N-glycosylated in the host RER.

Its subcellular location is the virion membrane. The protein localises to the host cell membrane. It carries out the reaction N-acetyl-9-O-acetylneuraminate + H2O = N-acetylneuraminate + acetate + H(+). The catalysed reaction is N-acetyl-4-O-acetylneuraminate + H2O = N-acetylneuraminate + acetate + H(+). Its function is as follows. Structural protein that makes short spikes at the surface of the virus. Contains receptor binding and receptor-destroying activities. Mediates de-O-acetylation of N-acetyl-4-O-acetylneuraminic acid, which is probably the receptor determinant recognized by the virus on the surface of erythrocytes and susceptible cells. This receptor-destroying activity is important for virus release as it probably helps preventing self-aggregation and ensures the efficient spread of the progeny virus from cell to cell. May serve as a secondary viral attachment protein for initiating infection, the spike protein being the major one. May become a target for both the humoral and the cellular branches of the immune system. The sequence is that of Hemagglutinin-esterase from Homo sapiens (Human).